Consider the following 869-residue polypeptide: Leucine--tRNA ligase (869 aa).

The 'HIGH' region signature appears at 42-52; the sequence is PYPSGKLHMGH. The short motif at 624 to 628 is the 'KMSKS' region element; the sequence is TMSKS. Lys-627 provides a ligand contact to ATP.

The protein belongs to the class-I aminoacyl-tRNA synthetase family.

The protein localises to the cytoplasm. The enzyme catalyses tRNA(Leu) + L-leucine + ATP = L-leucyl-tRNA(Leu) + AMP + diphosphate. This Nitrosomonas europaea (strain ATCC 19718 / CIP 103999 / KCTC 2705 / NBRC 14298) protein is Leucine--tRNA ligase.